Here is a 231-residue protein sequence, read N- to C-terminus: Large ribosomal subunit protein uL1 (231 aa).

This sequence belongs to the universal ribosomal protein uL1 family. In terms of assembly, part of the 50S ribosomal subunit.

Its function is as follows. Binds directly to 23S rRNA. The L1 stalk is quite mobile in the ribosome, and is involved in E site tRNA release. Protein L1 is also a translational repressor protein, it controls the translation of the L11 operon by binding to its mRNA. The polypeptide is Large ribosomal subunit protein uL1 (Staphylococcus carnosus (strain TM300)).